A 153-amino-acid chain; its full sequence is SsrA-binding protein (153 aa).

Belongs to the SmpB family.

Its subcellular location is the cytoplasm. Its function is as follows. Required for rescue of stalled ribosomes mediated by trans-translation. Binds to transfer-messenger RNA (tmRNA), required for stable association of tmRNA with ribosomes. tmRNA and SmpB together mimic tRNA shape, replacing the anticodon stem-loop with SmpB. tmRNA is encoded by the ssrA gene; the 2 termini fold to resemble tRNA(Ala) and it encodes a 'tag peptide', a short internal open reading frame. During trans-translation Ala-aminoacylated tmRNA acts like a tRNA, entering the A-site of stalled ribosomes, displacing the stalled mRNA. The ribosome then switches to translate the ORF on the tmRNA; the nascent peptide is terminated with the 'tag peptide' encoded by the tmRNA and targeted for degradation. The ribosome is freed to recommence translation, which seems to be the essential function of trans-translation. The chain is SsrA-binding protein from Lactobacillus delbrueckii subsp. bulgaricus (strain ATCC 11842 / DSM 20081 / BCRC 10696 / JCM 1002 / NBRC 13953 / NCIMB 11778 / NCTC 12712 / WDCM 00102 / Lb 14).